The sequence spans 457 residues: Protein translocase subunit SecY (457 aa).

Helical transmembrane passes span 17-37 (IFFT…PVPG), 75-95 (IALG…LVVF), 120-140 (LFTL…ALRM), 163-183 (VFYL…MWIG), 195-215 (ISLI…GSIF), 230-250 (IVSL…TVLI), 287-307 (VIPV…GQFL), 326-346 (VVYS…WTAT), 386-406 (LLGA…GRIL), and 412-432 (VSYF…LDTM).

It belongs to the SecY/SEC61-alpha family. Component of the Sec protein translocase complex. Heterotrimer consisting of SecY, SecE and SecG subunits. The heterotrimers can form oligomers, although 1 heterotrimer is thought to be able to translocate proteins. Interacts with the ribosome. Interacts with SecDF, and other proteins may be involved. Interacts with SecA.

It localises to the cell inner membrane. Functionally, the central subunit of the protein translocation channel SecYEG. Consists of two halves formed by TMs 1-5 and 6-10. These two domains form a lateral gate at the front which open onto the bilayer between TMs 2 and 7, and are clamped together by SecE at the back. The channel is closed by both a pore ring composed of hydrophobic SecY resides and a short helix (helix 2A) on the extracellular side of the membrane which forms a plug. The plug probably moves laterally to allow the channel to open. The ring and the pore may move independently. This chain is Protein translocase subunit SecY, found in Chlamydia muridarum (strain MoPn / Nigg).